Here is a 338-residue protein sequence, read N- to C-terminus: Anthranilate phosphoribosyltransferase (338 aa).

Residues glycine 81, 84–85 (GD), threonine 89, 91–94 (NIST), 109–117 (KHGNRAQSS), and threonine 121 contribute to the 5-phospho-alpha-D-ribose 1-diphosphate site. Glycine 81 contacts anthranilate. Residue serine 93 coordinates Mg(2+). Asparagine 112 contributes to the anthranilate binding site. Anthranilate is bound at residue arginine 167. Aspartate 225 and glutamate 226 together coordinate Mg(2+).

This sequence belongs to the anthranilate phosphoribosyltransferase family. As to quaternary structure, homodimer. Mg(2+) serves as cofactor.

It catalyses the reaction N-(5-phospho-beta-D-ribosyl)anthranilate + diphosphate = 5-phospho-alpha-D-ribose 1-diphosphate + anthranilate. It participates in amino-acid biosynthesis; L-tryptophan biosynthesis; L-tryptophan from chorismate: step 2/5. Its function is as follows. Catalyzes the transfer of the phosphoribosyl group of 5-phosphorylribose-1-pyrophosphate (PRPP) to anthranilate to yield N-(5'-phosphoribosyl)-anthranilate (PRA). The polypeptide is Anthranilate phosphoribosyltransferase (Rhizobium rhizogenes (strain K84 / ATCC BAA-868) (Agrobacterium radiobacter)).